A 382-amino-acid chain; its full sequence is Dual-specificity RNA methyltransferase RlmN (382 aa).

Glutamate 96 acts as the Proton acceptor in catalysis. The Radical SAM core domain maps to glutamine 102–aspartate 342. Cysteine 109 and cysteine 345 are disulfide-bonded. 3 residues coordinate [4Fe-4S] cluster: cysteine 116, cysteine 120, and cysteine 123. Residues glycine 170 to glutamate 171, serine 202, serine 224 to histidine 226, and asparagine 302 each bind S-adenosyl-L-methionine. Catalysis depends on cysteine 345, which acts as the S-methylcysteine intermediate.

It belongs to the radical SAM superfamily. RlmN family. [4Fe-4S] cluster is required as a cofactor.

It localises to the cytoplasm. The catalysed reaction is adenosine(2503) in 23S rRNA + 2 reduced [2Fe-2S]-[ferredoxin] + 2 S-adenosyl-L-methionine = 2-methyladenosine(2503) in 23S rRNA + 5'-deoxyadenosine + L-methionine + 2 oxidized [2Fe-2S]-[ferredoxin] + S-adenosyl-L-homocysteine. The enzyme catalyses adenosine(37) in tRNA + 2 reduced [2Fe-2S]-[ferredoxin] + 2 S-adenosyl-L-methionine = 2-methyladenosine(37) in tRNA + 5'-deoxyadenosine + L-methionine + 2 oxidized [2Fe-2S]-[ferredoxin] + S-adenosyl-L-homocysteine. Functionally, specifically methylates position 2 of adenine 2503 in 23S rRNA and position 2 of adenine 37 in tRNAs. m2A2503 modification seems to play a crucial role in the proofreading step occurring at the peptidyl transferase center and thus would serve to optimize ribosomal fidelity. The chain is Dual-specificity RNA methyltransferase RlmN from Pseudomonas syringae pv. syringae (strain B728a).